The chain runs to 122 residues: Large ribosomal subunit protein bL12 (122 aa).

Belongs to the bacterial ribosomal protein bL12 family. As to quaternary structure, homodimer. Part of the ribosomal stalk of the 50S ribosomal subunit. Forms a multimeric L10(L12)X complex, where L10 forms an elongated spine to which 2 to 4 L12 dimers bind in a sequential fashion. Binds GTP-bound translation factors.

Its function is as follows. Forms part of the ribosomal stalk which helps the ribosome interact with GTP-bound translation factors. Is thus essential for accurate translation. This is Large ribosomal subunit protein bL12 from Cronobacter sakazakii (strain ATCC BAA-894) (Enterobacter sakazakii).